Here is a 508-residue protein sequence, read N- to C-terminus: RanBP-type and C3HC4-type zinc finger-containing protein 1 (508 aa).

Methionine 1 is modified (N-acetylmethionine). The interval methionine 1 to arginine 218 is interaction with IRF3. Residues methionine 1 to glutamine 268 are interaction with TAB2. Serine 50 is modified (phosphoserine). The 65-residue stretch at isoleucine 55 to isoleucine 119 folds into the Ubiquitin-like domain. The segment at valine 69 to leucine 131 is interaction with RNF31. Residues glutamine 163–proline 191 are disordered. A RanBP2-type zinc finger spans residues proline 188–glutamate 220. A coiled-coil region spans residues aspartate 231 to asparagine 259. Positions glutamate 276–cysteine 504 are TRIAD supradomain. The Zn(2+) site is built by cysteine 280, cysteine 283, cysteine 298, histidine 300, cysteine 303, cysteine 306, and cysteine 321. Residues cysteine 280–cysteine 330 form an RING-type 1 zinc finger. Tyrosine 328 carries the phosphotyrosine modification. Zn(2+)-binding residues include cysteine 330, cysteine 369, cysteine 374, cysteine 389, cysteine 392, cysteine 397, cysteine 400, histidine 404, cysteine 409, cysteine 445, and cysteine 448. The IBR-type zinc finger occupies glutamine 349–cysteine 409. The RING-type 2; atypical zinc-finger motif lies at cysteine 445–threonine 474. Cysteine 458 is a catalytic residue. Zn(2+)-binding residues include cysteine 463 and cysteine 466.

It belongs to the RBR family. As to quaternary structure, component of the LUBAC complex (linear ubiquitin chain assembly complex) which consists of SHARPIN, RBCK1 and RNF31. LUBAC has a MW of approximately 600 kDa suggesting a heteromultimeric assembly of its subunits. Interacts with beta-I-type (PRKCB1) and zeta-type protein kinase C (PRKCZ). Interacts with UBE2L3. Interacts with IREB2 only in iron-rich conditions. Associates with the TNF-R1 signaling complex (TNF-RSC) in a stimulation-dependent manner. Interacts with EYA1, TAB2, TAB3, MAP3K7 TRAF6 and RIPK1. Interacts with IRF3. Auto-ubiquitinated. Auto-ubiquitination leads to degradation by the proteasome. In terms of processing, phosphorylated. In vitro, phosphorylation inhibits auto-ubiquitination activity.

It catalyses the reaction [E2 ubiquitin-conjugating enzyme]-S-ubiquitinyl-L-cysteine + [acceptor protein]-L-lysine = [E2 ubiquitin-conjugating enzyme]-L-cysteine + [acceptor protein]-N(6)-ubiquitinyl-L-lysine.. It participates in protein modification; protein ubiquitination. In terms of biological role, E3 ubiquitin-protein ligase, which accepts ubiquitin from specific E2 ubiquitin-conjugating enzymes, such as UBE2L3/UBCM4, and then transfers it to substrates. Functions as an E3 ligase for oxidized IREB2 and both heme and oxygen are necessary for IREB2 ubiquitination. Promotes ubiquitination of TAB2 and IRF3 and their degradation by the proteasome. Component of the LUBAC complex which conjugates linear ('Met-1'-linked) polyubiquitin chains to substrates and plays a key role in NF-kappa-B activation and regulation of inflammation. LUBAC conjugates linear polyubiquitin to IKBKG and RIPK1 and is involved in activation of the canonical NF-kappa-B and the JNK signaling pathways. Linear ubiquitination mediated by the LUBAC complex interferes with TNF-induced cell death and thereby prevents inflammation. LUBAC is recruited to the TNF-R1 signaling complex (TNF-RSC) following polyubiquitination of TNF-RSC components by BIRC2 and/or BIRC3 and to conjugate linear polyubiquitin to IKBKG and possibly other components contributing to the stability of the complex. The LUBAC complex is also involved in innate immunity by conjugating linear polyubiquitin chains at the surface of bacteria invading the cytosol to form the ubiquitin coat surrounding bacteria. LUBAC is not able to initiate formation of the bacterial ubiquitin coat, and can only promote formation of linear polyubiquitins on pre-existing ubiquitin. The bacterial ubiquitin coat acts as an 'eat-me' signal for xenophagy and promotes NF-kappa-B activation. Together with OTULIN, the LUBAC complex regulates the canonical Wnt signaling during angiogenesis. Binds polyubiquitin of different linkage types. This chain is RanBP-type and C3HC4-type zinc finger-containing protein 1 (Rbck1), found in Mus musculus (Mouse).